A 376-amino-acid chain; its full sequence is Deoxyuridine 5'-triphosphate nucleotidohydrolase (376 aa).

The protein belongs to the dUTPase family. Mg(2+) serves as cofactor.

The catalysed reaction is dUTP + H2O = dUMP + diphosphate + H(+). Its function is as follows. Involved in nucleotide metabolism: produces dUMP, the immediate precursor of thymidine nucleotides and decreases the intracellular concentration of dUTP to avoid uracil incorporation into viral DNA. The protein is Deoxyuridine 5'-triphosphate nucleotidohydrolase of Human herpesvirus 6B (strain Z29) (HHV-6 variant B).